We begin with the raw amino-acid sequence, 67 residues long: Protein C' (67 aa).

This sequence belongs to the rhabdoviruses C protein family.

Functionally, seems to stimulates transcription by the viral polymerase. May play a role in viral pathogenesis or transmission by insects vectors. The sequence is that of Protein C' (P) from Aedes (Bovine).